A 259-amino-acid polypeptide reads, in one-letter code: MWRRVALLSPMISSSSRSLKLSQAASGLKVGESFATDIISQEERVSPPKEKAPFITFVLGGPGSGKGTQCEKIVETFGLQHLSAGDLLRREIAMHTENGAMILNLIKDGKIVPSEVTVKLIQKELESSDNRKFLIDGFPRTEENRVAFERIIRADPDVVLFFDCPEEEMVKRVLNRNQGRIDDNITTMKKRLKIFNALNRPVIDYYKNKGKLYTINAVGTVDDIFQHVLPIFNSFEQLKESSHVNPQSHLGSSLVENSS.

An ATP-binding site is contributed by 63–68 (GSGKGT). Residues 83 to 112 (SAGDLLRREIAMHTENGAMILNLIKDGKIV) form an NMP region. A ribonucleoside 5'-phosphate-binding positions include arginine 89, 110 to 112 (KIV), and 137 to 140 (GFPR). Residue asparagine 144 coordinates CMP. An LID region spans residues 175–183 (NRNQGRIDD). Arginine 176 contributes to the ATP binding site. Positions 180 and 191 each coordinate a ribonucleoside 5'-phosphate. Residue glycine 219 participates in ATP binding.

The protein belongs to the adenylate kinase family. UMP-CMP kinase subfamily. Monomer. Requires Mg(2+) as cofactor.

Its subcellular location is the cytoplasm. The protein localises to the nucleus. It catalyses the reaction CMP + ATP = CDP + ADP. It carries out the reaction dCMP + ATP = dCDP + ADP. The catalysed reaction is UMP + ATP = UDP + ADP. In terms of biological role, catalyzes the phosphorylation of pyrimidine nucleoside monophosphates at the expense of ATP. Plays an important role in de novo pyrimidine nucleotide biosynthesis. Has preference for UMP and CMP as phosphate acceptors. The chain is Probable UMP-CMP kinase 2 (UMK2) from Arabidopsis thaliana (Mouse-ear cress).